Reading from the N-terminus, the 240-residue chain is uncharacterized protein (240 aa).

Residues 197 to 210 show a composition bias toward polar residues; it reads PLKSHSASRLNHLT. A disordered region spans residues 197-222; the sequence is PLKSHSASRLNHLTPSPRPGETPLEN.

This is an uncharacterized protein from Caenorhabditis elegans.